The chain runs to 240 residues: UDP-2,3-diacylglucosamine hydrolase (240 aa).

5 residues coordinate Mn(2+): Asp-8, His-10, Asp-41, Asn-79, and His-114. A substrate-binding site is contributed by 79–80 (NR). The substrate site is built by Asp-122, Ser-160, Asn-164, Lys-167, and His-195. Positions 195 and 197 each coordinate Mn(2+).

It belongs to the LpxH family. It depends on Mn(2+) as a cofactor.

The protein localises to the cell inner membrane. It catalyses the reaction UDP-2-N,3-O-bis[(3R)-3-hydroxytetradecanoyl]-alpha-D-glucosamine + H2O = 2-N,3-O-bis[(3R)-3-hydroxytetradecanoyl]-alpha-D-glucosaminyl 1-phosphate + UMP + 2 H(+). It participates in glycolipid biosynthesis; lipid IV(A) biosynthesis; lipid IV(A) from (3R)-3-hydroxytetradecanoyl-[acyl-carrier-protein] and UDP-N-acetyl-alpha-D-glucosamine: step 4/6. In terms of biological role, hydrolyzes the pyrophosphate bond of UDP-2,3-diacylglucosamine to yield 2,3-diacylglucosamine 1-phosphate (lipid X) and UMP by catalyzing the attack of water at the alpha-P atom. Involved in the biosynthesis of lipid A, a phosphorylated glycolipid that anchors the lipopolysaccharide to the outer membrane of the cell. This chain is UDP-2,3-diacylglucosamine hydrolase, found in Proteus mirabilis (strain HI4320).